A 576-amino-acid polypeptide reads, in one-letter code: Low-affinity glucose transporter HXT4 (576 aa).

Residues 1-56 form a disordered region; the sequence is MSEEAAYQEDTAVQNTPADALSPVESDSNSALSTPSNKAERDDMKDFDENHEESNN. Residues 1–66 lie on the Cytoplasmic side of the membrane; that stretch reads MSEEAAYQED…YVEIPKKPAS (66 aa). The span at 25-37 shows a compositional bias: polar residues; it reads ESDSNSALSTPSN. Residues 38 to 54 are compositionally biased toward basic and acidic residues; the sequence is KAERDDMKDFDENHEES. Residue lysine 45 forms a Glycyl lysine isopeptide (Lys-Gly) (interchain with G-Cter in ubiquitin) linkage. A helical membrane pass occupies residues 67–87; sequence AYVTVSICCLMVAFGGFVFGW. Residues 88–122 are Extracellular-facing; sequence DTGTISGFVAQTDFIRRFGMKHHDGTYYLSKVRTG. A helical membrane pass occupies residues 123 to 143; it reads LMVSIINIGCAIGGIILAKLG. At 144-149 the chain is on the cytoplasmic side; that stretch reads DMYGRK. Residues 150–170 traverse the membrane as a helical segment; the sequence is MGLIVVVVIYIIGIIIQIASI. Residues 171–180 are Extracellular-facing; it reads NKWYQYFIGR. Residues 181 to 201 form a helical membrane-spanning segment; sequence IISGLGVGGIAVLSPMLISEV. Residues 202–207 are Cytoplasmic-facing; the sequence is SPKHIR. The chain crosses the membrane as a helical span at residues 208 to 228; that stretch reads GTLVSCYQLMITLGIFLGYCT. At 229–242 the chain is on the extracellular side; that stretch reads NYGTKTYTNSVQWR. A helical transmembrane segment spans residues 243-263; that stretch reads VPLGLGFAWALFMIGGMTFVP. The Cytoplasmic segment spans residues 264-346; sequence ESPRYLVEVG…IQSLQQLTGD (83 aa). A helical membrane pass occupies residues 347–363; that stretch reads NYFFYYGTTVFTAVGLS. The Extracellular portion of the chain corresponds to 364–369; sequence DSFETS. A helical membrane pass occupies residues 370–387; that stretch reads IVLGIVNFASTFVGIFLV. Over 388–394 the chain is Cytoplasmic; it reads ERYGRRR. The helical transmembrane segment at 395–415 threads the bilayer; sequence CLLWGAASMTACMVVFASVGV. At 416-437 the chain is on the extracellular side; the sequence is TRLWPNGKKNGSSKGAGNCMIV. An N-linked (GlcNAc...) asparagine glycan is attached at asparagine 425. The chain crosses the membrane as a helical span at residues 438 to 458; the sequence is FTCFYLFCFATTWAPIPFVVN. Residues 459–475 lie on the Cytoplasmic side of the membrane; that stretch reads SETFPLRVKSKCMAIAQ. A helical transmembrane segment spans residues 476–496; sequence ACNWIWGFLIGFFTPFISNAI. A topological domain (extracellular) is located at residue aspartate 497. Residues 498–518 traverse the membrane as a helical segment; that stretch reads FYYGYVFMGCLVFSYFYVFFF. At 519-576 the chain is on the cytoplasmic side; it reads VPETKGLTLEEVNTLWEEGVLPWKSPSWVPPNKRGTDYNADDLMHDDQPFYKKMFGKK.

The protein belongs to the major facilitator superfamily. Sugar transporter (TC 2.A.1.1) family.

It localises to the cell membrane. With respect to regulation, xylose uptake is strongly inhibited by glucose. Low-affinity glucose transporter. Can also transport xylose. This Saccharomyces cerevisiae (strain JAY291) (Baker's yeast) protein is Low-affinity glucose transporter HXT4 (HXT4).